We begin with the raw amino-acid sequence, 611 residues long: Major facilitator superfamily domain-containing protein YCR023C (611 aa).

Residues 1–89 (MARQKLTFKE…GRFSEKHGRK (89 aa)) are Extracellular-facing. Residues 90 to 110 (ITLTCGLIGTSVSLLILGFSR) traverse the membrane as a helical segment. The Cytoplasmic segment spans residues 111–152 (NFYQALVARSLMGLLNGNVGVIRTIIGEIATERKHQALAFST). Residues 153–173 (MPLLFQFGAVVGPMIGGFLVF) traverse the membrane as a helical segment. The Extracellular portion of the chain corresponds to 174 to 199 (RDGTMNEVPLWFPHFAKRIIRSYPYA). A helical membrane pass occupies residues 200–220 (LPNVVVCMFLMFGLTNATLFL). The Cytoplasmic segment spans residues 221–353 (EETHPAFKDR…SIFHHVFHTK (133 aa)). The span at 261 to 271 (DDSENIHHRNE) shows a compositional bias: basic and acidic residues. The interval 261 to 301 (DDSENIHHRNENVNSIRGQDSEEDENSPLVNTTNDDDTESI) is disordered. Ser-313 carries the phosphoserine modification. A helical membrane pass occupies residues 354–372 (VFYPISVNFIMALHLIVYN). At 373–413 (EFLPVFLAYDLAVDPENPKKLASKFPWKISGGIGYEPEQTG) the chain is on the extracellular side. Residues 414-434 (TLLSTTGIFGCFVVIFIFPIV) form a helical membrane-spanning segment. The Cytoplasmic segment spans residues 435 to 442 (DRNFDCLT). Residues 443-463 (IFRTLVKLYPIMYVMVPYVVF) traverse the membrane as a helical segment. Residues 464 to 542 (LQNERIPSWY…YIMSWSQQND (79 aa)) are Extracellular-facing. A helical transmembrane segment spans residues 543-563 (VAWVSWWSLSLFCMVALYQSY). The Cytoplasmic segment spans residues 564–611 (KIAPIDDNENELHGQGSEDAYNSQSQSSDLRMAHRSSLSSLSNQRCTT). Ser-603 carries the post-translational modification Phosphoserine.

It belongs to the major facilitator superfamily.

The protein resides in the membrane. It carries out the reaction chloride(in) = chloride(out). Its function is as follows. Outward-rectifying chloride channel involved in chloride homeostasis. The sequence is that of Major facilitator superfamily domain-containing protein YCR023C from Saccharomyces cerevisiae (strain ATCC 204508 / S288c) (Baker's yeast).